A 556-amino-acid chain; its full sequence is 2-succinyl-5-enolpyruvyl-6-hydroxy-3-cyclohexene-1-carboxylate synthase (556 aa).

This sequence belongs to the TPP enzyme family. MenD subfamily. Homodimer. The cofactor is Mg(2+). Mn(2+) is required as a cofactor. Requires thiamine diphosphate as cofactor.

The enzyme catalyses isochorismate + 2-oxoglutarate + H(+) = 5-enolpyruvoyl-6-hydroxy-2-succinyl-cyclohex-3-ene-1-carboxylate + CO2. It participates in quinol/quinone metabolism; 1,4-dihydroxy-2-naphthoate biosynthesis; 1,4-dihydroxy-2-naphthoate from chorismate: step 2/7. The protein operates within quinol/quinone metabolism; menaquinone biosynthesis. Catalyzes the thiamine diphosphate-dependent decarboxylation of 2-oxoglutarate and the subsequent addition of the resulting succinic semialdehyde-thiamine pyrophosphate anion to isochorismate to yield 2-succinyl-5-enolpyruvyl-6-hydroxy-3-cyclohexene-1-carboxylate (SEPHCHC). This is 2-succinyl-5-enolpyruvyl-6-hydroxy-3-cyclohexene-1-carboxylate synthase from Escherichia coli (strain ATCC 8739 / DSM 1576 / NBRC 3972 / NCIMB 8545 / WDCM 00012 / Crooks).